The following is a 177-amino-acid chain: ATP synthase subunit delta (177 aa).

The protein belongs to the ATPase delta chain family. As to quaternary structure, F-type ATPases have 2 components, F(1) - the catalytic core - and F(0) - the membrane proton channel. F(1) has five subunits: alpha(3), beta(3), gamma(1), delta(1), epsilon(1). F(0) has three main subunits: a(1), b(2) and c(10-14). The alpha and beta chains form an alternating ring which encloses part of the gamma chain. F(1) is attached to F(0) by a central stalk formed by the gamma and epsilon chains, while a peripheral stalk is formed by the delta and b chains.

It localises to the cell inner membrane. F(1)F(0) ATP synthase produces ATP from ADP in the presence of a proton or sodium gradient. F-type ATPases consist of two structural domains, F(1) containing the extramembraneous catalytic core and F(0) containing the membrane proton channel, linked together by a central stalk and a peripheral stalk. During catalysis, ATP synthesis in the catalytic domain of F(1) is coupled via a rotary mechanism of the central stalk subunits to proton translocation. In terms of biological role, this protein is part of the stalk that links CF(0) to CF(1). It either transmits conformational changes from CF(0) to CF(1) or is implicated in proton conduction. The protein is ATP synthase subunit delta of Azobacteroides pseudotrichonymphae genomovar. CFP2.